Reading from the N-terminus, the 303-residue chain is Glycine--tRNA ligase alpha subunit (303 aa).

This sequence belongs to the class-II aminoacyl-tRNA synthetase family. Tetramer of two alpha and two beta subunits.

The protein resides in the cytoplasm. The catalysed reaction is tRNA(Gly) + glycine + ATP = glycyl-tRNA(Gly) + AMP + diphosphate. The chain is Glycine--tRNA ligase alpha subunit from Erwinia tasmaniensis (strain DSM 17950 / CFBP 7177 / CIP 109463 / NCPPB 4357 / Et1/99).